The primary structure comprises 738 residues: DNA repair and recombination protein RAD54-like (738 aa).

The disordered stretch occupies residues 1–31 (MRRSLAPSQVAKRKQGPDSDDEEDWEPDMEP). Positions 18–29 (DSDDEEDWEPDM) are enriched in acidic residues. In terms of domain architecture, Helicase ATP-binding spans 164–339 (GRRIENSYGC…FSLVHFVNSG (176 aa)). An ATP-binding site is contributed by 177–184 (DEMGLGKT). The DEAH box motif lies at 290–293 (DEGH). Positions 493–647 (LVLDYILAMT…CVVDEEQDVE (155 aa)) constitute a Helicase C-terminal domain. A phosphoserine mark is found at Ser-566 and Ser-567.

Homohexamer. Interacts with RAD51. In terms of processing, phosphorylated. Phosphorylations at Ser-566 and Ser-567 allow efficient removal of RAD51 filaments from DNA.

It catalyses the reaction ATP + H2O = ADP + phosphate + H(+). Functionally, plays an essential role in homologous recombination (HR) which is a major pathway for repairing DNA double-strand breaks (DSBs), single-stranded DNA (ssDNA) gaps, and stalled or collapsed replication forks. Acts as a molecular motor during the homology search and guides RAD51 ssDNA along a donor dsDNA thereby changing the homology search from the diffusion-based mechanism to a motor-guided mechanism. Also plays an essential role in RAD51-mediated synaptic complex formation which consists of three strands encased in a protein filament formed once homology is recognized. Once DNA strand exchange occured, dissociates RAD51 from nucleoprotein filaments formed on dsDNA. In Danio rerio (Zebrafish), this protein is DNA repair and recombination protein RAD54-like (rad54l).